A 505-amino-acid chain; its full sequence is MITLTGHTLTIEEMKRLLLEGEGVTACPNSMQKVAECREVVEKIVEDGKVVYGITTGFGKFSDVLIQKDDVKALQHNLIQSHACGIGDPFPEEVSRGMLILRANTMLKGVSGVRPLVVNMLLEFVNRKIHPVVPQQGSLGASGDLAPLSHLALVLLGEGEVFYKGKRVHAMVALTEEGLEPIELEAKEGLALINGTQAMTAQGVLSYIEAEATAYQAEFIASMTIEGLQGIIDAFDENVHKARGYKEQVEVASRIRDILHDSKLTTKQGKLRVQDAYSLRCIPQVHGASWQVLNYVKEKLEIEMNAATDNPLIFDGGEKVISGGNFHGQPIAFAMDFLKVGMAELANISERRIERLVNPQLNDLPPFLSPEPGLQSGAMIMQYAAASLVSENKTLAHPASVDSIPSSANQEDHVSMGTIASRHAHQIIQNVRRVLSIEMICAMQAAEYRGIENMSTVTKSFYHQGRQQVPSITNDRIFSTDIENIAYWLKTNYSIKERLDVNAAL.

The 5-imidazolinone (Ala-Gly) cross-link spans 141–143; that stretch reads ASG. Ser142 carries the post-translational modification 2,3-didehydroalanine (Ser).

This sequence belongs to the PAL/histidase family. Contains an active site 4-methylidene-imidazol-5-one (MIO), which is formed autocatalytically by cyclization and dehydration of residues Ala-Ser-Gly.

It localises to the cytoplasm. The enzyme catalyses L-histidine = trans-urocanate + NH4(+). It functions in the pathway amino-acid degradation; L-histidine degradation into L-glutamate; N-formimidoyl-L-glutamate from L-histidine: step 1/3. The protein is Histidine ammonia-lyase of Bacillus thuringiensis subsp. konkukian (strain 97-27).